We begin with the raw amino-acid sequence, 142 residues long: 3-hydroxyacyl-[acyl-carrier-protein] dehydratase FabZ (142 aa).

The active site involves histidine 50.

The protein belongs to the thioester dehydratase family. FabZ subfamily.

The protein resides in the cytoplasm. The catalysed reaction is a (3R)-hydroxyacyl-[ACP] = a (2E)-enoyl-[ACP] + H2O. Involved in unsaturated fatty acids biosynthesis. Catalyzes the dehydration of short chain beta-hydroxyacyl-ACPs and long chain saturated and unsaturated beta-hydroxyacyl-ACPs. The protein is 3-hydroxyacyl-[acyl-carrier-protein] dehydratase FabZ of Clostridium botulinum (strain Alaska E43 / Type E3).